A 223-amino-acid polypeptide reads, in one-letter code: Ribonuclease DdI (223 aa).

The signal sequence occupies residues 1–25; that stretch reads MRLIAALLSVLLIASTAQSTVTIYE. C46 and C51 are joined by a disulfide. Active-site residues include H63, E113, and H117. A disulfide bond links C78 and C120. N144 carries an N-linked (GlcNAc...) asparagine glycan. 2 disulfide bridges follow: C183–C213 and C194–C205.

It belongs to the RNase T2 family.

It is found in the lysosome. The catalysed reaction is a ribonucleotidyl-ribonucleotide-RNA + H2O = a 3'-end 3'-phospho-ribonucleotide-RNA + a 5'-end dephospho-ribonucleoside-RNA + H(+). Its activity is regulated as follows. Inhibited by Cu(2+) and Zn(2+). Its function is as follows. Releases mononucleotides from RNA in the order of 3'-GMP &gt; 3'-UMP &gt; 3'-AMP &gt; 3'-CMP. This Dictyostelium discoideum (Social amoeba) protein is Ribonuclease DdI (ddiA).